Consider the following 449-residue polypeptide: PGL/p-HBAD biosynthesis rhamnosyltransferase (449 aa).

This sequence belongs to the glycosyltransferase 28 family.

Functionally, catalyzes the transfer of the first rhamnosyl residue on p-hydroxybenzoic acid or phenolphthiocerol derivatives to form, after O-methylation at position 2 of the sugar unit, mono-O-methyl-glycosyl-p-hydroxybenzoic acid derivative (p-HBAD I) and 2-O-methyl-rhamnosyl-phenolphthiocerol dimycocerosate (also called mycoside B) during p-hydroxybenzoic acid derivatives (p-HBAD) and glycosylated phenolphthiocerol dimycocerosates (PGL) biosynthesis. The polypeptide is PGL/p-HBAD biosynthesis rhamnosyltransferase (Mycobacterium bovis (strain BCG / Pasteur 1173P2)).